A 227-amino-acid polypeptide reads, in one-letter code: Cytochrome c oxidase subunit 2 (227 aa).

At 1 to 14 (MAYPFQLGLQDATS) the chain is on the mitochondrial intermembrane side. Residues 15-45 (PIMEELMNFHDHTLMIVFLISTLVLYIISLM) traverse the membrane as a helical segment. The Mitochondrial matrix segment spans residues 46 to 59 (LTTKLTHTSTMDAQ). A helical membrane pass occupies residues 60-87 (EVETIWTILPAVILILIALPSLRILYMM). Residues 88–227 (DEINNPALTV…YFENWSASMI (140 aa)) lie on the Mitochondrial intermembrane side of the membrane. Positions 161, 196, 198, 200, 204, and 207 each coordinate Cu cation. Glu198 serves as a coordination point for Mg(2+). The residue at position 218 (Tyr218) is a Phosphotyrosine.

The protein belongs to the cytochrome c oxidase subunit 2 family. In terms of assembly, component of the cytochrome c oxidase (complex IV, CIV), a multisubunit enzyme composed of 14 subunits. The complex is composed of a catalytic core of 3 subunits MT-CO1, MT-CO2 and MT-CO3, encoded in the mitochondrial DNA, and 11 supernumerary subunits COX4I, COX5A, COX5B, COX6A, COX6B, COX6C, COX7A, COX7B, COX7C, COX8 and NDUFA4, which are encoded in the nuclear genome. The complex exists as a monomer or a dimer and forms supercomplexes (SCs) in the inner mitochondrial membrane with NADH-ubiquinone oxidoreductase (complex I, CI) and ubiquinol-cytochrome c oxidoreductase (cytochrome b-c1 complex, complex III, CIII), resulting in different assemblies (supercomplex SCI(1)III(2)IV(1) and megacomplex MCI(2)III(2)IV(2)). Found in a complex with TMEM177, COA6, COX18, COX20, SCO1 and SCO2. Interacts with TMEM177 in a COX20-dependent manner. Interacts with COX20. Interacts with COX16. The cofactor is Cu cation.

It is found in the mitochondrion inner membrane. It catalyses the reaction 4 Fe(II)-[cytochrome c] + O2 + 8 H(+)(in) = 4 Fe(III)-[cytochrome c] + 2 H2O + 4 H(+)(out). Component of the cytochrome c oxidase, the last enzyme in the mitochondrial electron transport chain which drives oxidative phosphorylation. The respiratory chain contains 3 multisubunit complexes succinate dehydrogenase (complex II, CII), ubiquinol-cytochrome c oxidoreductase (cytochrome b-c1 complex, complex III, CIII) and cytochrome c oxidase (complex IV, CIV), that cooperate to transfer electrons derived from NADH and succinate to molecular oxygen, creating an electrochemical gradient over the inner membrane that drives transmembrane transport and the ATP synthase. Cytochrome c oxidase is the component of the respiratory chain that catalyzes the reduction of oxygen to water. Electrons originating from reduced cytochrome c in the intermembrane space (IMS) are transferred via the dinuclear copper A center (CU(A)) of subunit 2 and heme A of subunit 1 to the active site in subunit 1, a binuclear center (BNC) formed by heme A3 and copper B (CU(B)). The BNC reduces molecular oxygen to 2 water molecules using 4 electrons from cytochrome c in the IMS and 4 protons from the mitochondrial matrix. The chain is Cytochrome c oxidase subunit 2 (MT-CO2) from Maxomys surifer (Indomalayan maxomys).